The following is a 961-amino-acid chain: Gamma-tubulin small complex component GCP2 (961 aa).

Residues 15 to 76 form a disordered region; it reads NLHRSPKLAT…KPSIPPLKSE (62 aa). A compositionally biased stretch (polar residues) spans 43–54; it reads LGSNVVSHPTRS. Residues 55-65 show a composition bias toward basic and acidic residues; that stretch reads SPEKTTDKPAD.

It belongs to the TUBGCP family. As to quaternary structure, component of the gamma-tubulin small complex (gamma-TuSC) composed of tubulin gamma chain, gamma-tubulin complex protein 2 (GCP2) and gamma-tubulin complex protein 3 (GCP3). Interacts with tubulin gamma chain.

It localises to the cytoplasm. The protein localises to the cytoskeleton. It is found in the flagellum axoneme. The protein resides in the flagellum basal body. Its function is as follows. Component of the gamma-tubulin small complex (gamma-TuSC) involved in microtubule (MT) nucleation for the formation of median bodies and in the biogenesis of flagella. Gamma-TuSC may be required for the correct positioning of EB1 within the trophozoites. This chain is Gamma-tubulin small complex component GCP2, found in Giardia intestinalis (strain ATCC 50803 / WB clone C6) (Giardia lamblia).